A 195-amino-acid chain; its full sequence is ATP-dependent Clp protease proteolytic subunit (195 aa).

Residue Ser102 is the Nucleophile of the active site. His125 is a catalytic residue.

Belongs to the peptidase S14 family. Component of the chloroplastic Clp protease core complex.

The protein localises to the plastid. The protein resides in the chloroplast stroma. The enzyme catalyses Hydrolysis of proteins to small peptides in the presence of ATP and magnesium. alpha-casein is the usual test substrate. In the absence of ATP, only oligopeptides shorter than five residues are hydrolyzed (such as succinyl-Leu-Tyr-|-NHMec, and Leu-Tyr-Leu-|-Tyr-Trp, in which cleavage of the -Tyr-|-Leu- and -Tyr-|-Trp bonds also occurs).. In terms of biological role, cleaves peptides in various proteins in a process that requires ATP hydrolysis. Has a chymotrypsin-like activity. Plays a major role in the degradation of misfolded proteins. This is ATP-dependent Clp protease proteolytic subunit from Phaseolus vulgaris (Kidney bean).